We begin with the raw amino-acid sequence, 221 residues long: Translation initiation factor 6 (221 aa).

It belongs to the eIF-6 family.

In terms of biological role, binds to the 50S ribosomal subunit and prevents its association with the 30S ribosomal subunit to form the 70S initiation complex. In Natronomonas pharaonis (strain ATCC 35678 / DSM 2160 / CIP 103997 / JCM 8858 / NBRC 14720 / NCIMB 2260 / Gabara) (Halobacterium pharaonis), this protein is Translation initiation factor 6.